Consider the following 258-residue polypeptide: MKKMPMRKRFGQHFLHDSFVLQKIVSAIHPQKTDTLVEIGPGRGALTDYLLTECDNLALVEIDGDLVAFLQKKYNQQKNITIYQNDALQFDFSSVKTDKPLRVVGNLPYNISTPLLFHLFSQIHCIEDMHFMLQKEVVRRITAEVGSHDYGRLSVMAQYFCDNTYLFTVSPQAFTPPPRVESAIIRLIPRHNFTPVAKNLDQLSHVVKEAFSYRRKTVGNALKKLINPSQWPLLEINPQLRPQELTVEDFVKISNILN.

S-adenosyl-L-methionine contacts are provided by His13, Leu15, Gly40, Glu61, Asp86, and Asn106.

The protein belongs to the class I-like SAM-binding methyltransferase superfamily. rRNA adenine N(6)-methyltransferase family. RsmA subfamily.

The protein resides in the cytoplasm. The enzyme catalyses adenosine(1518)/adenosine(1519) in 16S rRNA + 4 S-adenosyl-L-methionine = N(6)-dimethyladenosine(1518)/N(6)-dimethyladenosine(1519) in 16S rRNA + 4 S-adenosyl-L-homocysteine + 4 H(+). Specifically dimethylates two adjacent adenosines (A1518 and A1519) in the loop of a conserved hairpin near the 3'-end of 16S rRNA in the 30S particle. May play a critical role in biogenesis of 30S subunits. This chain is Ribosomal RNA small subunit methyltransferase A, found in Coxiella burnetii (strain Dugway 5J108-111).